A 428-amino-acid chain; its full sequence is Enolase (428 aa).

A (2R)-2-phosphoglycerate-binding site is contributed by Gln-163. Glu-205 serves as the catalytic Proton donor. Positions 242, 283, and 310 each coordinate Mg(2+). Lys-335, Arg-364, Ser-365, and Lys-386 together coordinate (2R)-2-phosphoglycerate. Lys-335 (proton acceptor) is an active-site residue.

This sequence belongs to the enolase family. Requires Mg(2+) as cofactor.

Its subcellular location is the cytoplasm. It localises to the secreted. The protein localises to the cell surface. It catalyses the reaction (2R)-2-phosphoglycerate = phosphoenolpyruvate + H2O. It participates in carbohydrate degradation; glycolysis; pyruvate from D-glyceraldehyde 3-phosphate: step 4/5. Functionally, catalyzes the reversible conversion of 2-phosphoglycerate (2-PG) into phosphoenolpyruvate (PEP). It is essential for the degradation of carbohydrates via glycolysis. This chain is Enolase, found in Sulfurihydrogenibium sp. (strain YO3AOP1).